The primary structure comprises 257 residues: Imidazole glycerol phosphate synthase subunit HisF (257 aa).

Residues Asp11 and Asp130 contribute to the active site.

This sequence belongs to the HisA/HisF family. Heterodimer of HisH and HisF.

It localises to the cytoplasm. The catalysed reaction is 5-[(5-phospho-1-deoxy-D-ribulos-1-ylimino)methylamino]-1-(5-phospho-beta-D-ribosyl)imidazole-4-carboxamide + L-glutamine = D-erythro-1-(imidazol-4-yl)glycerol 3-phosphate + 5-amino-1-(5-phospho-beta-D-ribosyl)imidazole-4-carboxamide + L-glutamate + H(+). Its pathway is amino-acid biosynthesis; L-histidine biosynthesis; L-histidine from 5-phospho-alpha-D-ribose 1-diphosphate: step 5/9. IGPS catalyzes the conversion of PRFAR and glutamine to IGP, AICAR and glutamate. The HisF subunit catalyzes the cyclization activity that produces IGP and AICAR from PRFAR using the ammonia provided by the HisH subunit. In Mannheimia succiniciproducens (strain KCTC 0769BP / MBEL55E), this protein is Imidazole glycerol phosphate synthase subunit HisF.